Reading from the N-terminus, the 140-residue chain is MSSEYRTGREGEFTYRGHTLDELQAMSLEDITALLPARQRRTIERGLTTEQQKLRETVRDADPQKTANDPIRTHLRDMPILPSFVEKTIAVYNGQSFERVRIEPEMIGHYLGEFQLTRTSVEHGQAGIGATRSSKFVPLK.

Residues 43–71 form a disordered region; the sequence is IERGLTTEQQKLRETVRDADPQKTANDPI. A compositionally biased stretch (basic and acidic residues) spans 52-63; it reads QKLRETVRDADP.

This sequence belongs to the universal ribosomal protein uS19 family.

Functionally, protein S19 forms a complex with S13 that binds strongly to the 16S ribosomal RNA. The protein is Small ribosomal subunit protein uS19 of Haloquadratum walsbyi (strain DSM 16790 / HBSQ001).